Here is a 347-residue protein sequence, read N- to C-terminus: Twinfilin-2 (347 aa).

ADF-H domains follow at residues 3–137 and 175–311; these read LVLV…RHIT and GLAF…DEVH. Positions 314–347 are disordered; the sequence is QHAHKQAFAKPRGPAGKRGNKRLIKGGGENGGNS. Residues 338–347 are compositionally biased toward gly residues; sequence KGGGENGGNS.

This sequence belongs to the actin-binding proteins ADF family. Twinfilin subfamily. In terms of assembly, interacts with G-actin; ADP-actin form and capping protein (CP).

Its subcellular location is the cytoplasm. The protein resides in the cytoskeleton. It localises to the perinuclear region. Its function is as follows. Actin-binding protein involved in motile and morphological processes. Inhibits actin polymerization, likely by sequestering G-actin. This is Twinfilin-2 (twf2) from Danio rerio (Zebrafish).